The chain runs to 60 residues: UPF0434 protein PC1_1771 (60 aa).

The protein belongs to the UPF0434 family.

The protein is UPF0434 protein PC1_1771 of Pectobacterium carotovorum subsp. carotovorum (strain PC1).